A 339-amino-acid polypeptide reads, in one-letter code: F-box protein At3g22700 (339 aa).

The F-box domain occupies 1 to 49 (MMSNLPLDLVEEILSRVPATSLKRLRSTCRQWNALLKDRRFTEKHFRKA).

The chain is F-box protein At3g22700 from Arabidopsis thaliana (Mouse-ear cress).